The chain runs to 561 residues: Mesoderm induction early response protein 2 (561 aa).

Disordered regions lie at residues 1–28 and 52–188; these read MAEA…GEPN and QNYG…EDPL. Position 11 is a phosphoserine (serine 11). Over residues 140–165 the composition is skewed to polar residues; it reads QSSADDLTPSVTSHEASDLFPSQSGS. The region spanning 195 to 292 is the ELM2 domain; that stretch reads KEIMVGPQFQ…EALRRLRFNV (98 aa). In terms of domain architecture, SANT spans 297 to 349; it reads DGLCAWSEEERRNFEHGFRVHGKNFHLIQANKVRTRSVGECVEYYYLWKKSER. Positions 360 to 515 are disordered; it reads GRRKYGPSGN…DGEPEETVGP (156 aa). The segment covering 417–428 has biased composition (low complexity); that stretch reads LSMGSSMSRSLG. The segment covering 439 to 451 has biased composition (pro residues); the sequence is SSEPGPRLFPPLD. Over residues 453–482 the composition is skewed to low complexity; sequence PSALPSSRRPPALAEPAFFPPATAAPEPGA.

Part of a complex containing at least CDYL, MIER1, MIER2, HDAC1 and HDAC2.

The protein resides in the nucleus. Functionally, transcriptional repressor. This Bos taurus (Bovine) protein is Mesoderm induction early response protein 2 (MIER2).